The primary structure comprises 382 residues: 1-deoxy-D-xylulose 5-phosphate reductoisomerase (382 aa).

NADPH contacts are provided by threonine 10, glycine 11, serine 12, isoleucine 13, glycine 36, lysine 37, asparagine 38, and asparagine 121. Lysine 122 is a binding site for 1-deoxy-D-xylulose 5-phosphate. Glutamate 123 provides a ligand contact to NADPH. Aspartate 147 provides a ligand contact to Mn(2+). Residues serine 148, glutamate 149, serine 173, and histidine 196 each contribute to the 1-deoxy-D-xylulose 5-phosphate site. Glutamate 149 serves as a coordination point for Mn(2+). Glycine 202 provides a ligand contact to NADPH. The 1-deoxy-D-xylulose 5-phosphate site is built by serine 209, asparagine 214, lysine 215, and glutamate 218. A Mn(2+)-binding site is contributed by glutamate 218.

The protein belongs to the DXR family. The cofactor is Mg(2+). Requires Mn(2+) as cofactor.

The enzyme catalyses 2-C-methyl-D-erythritol 4-phosphate + NADP(+) = 1-deoxy-D-xylulose 5-phosphate + NADPH + H(+). The protein operates within isoprenoid biosynthesis; isopentenyl diphosphate biosynthesis via DXP pathway; isopentenyl diphosphate from 1-deoxy-D-xylulose 5-phosphate: step 1/6. Its function is as follows. Catalyzes the NADPH-dependent rearrangement and reduction of 1-deoxy-D-xylulose-5-phosphate (DXP) to 2-C-methyl-D-erythritol 4-phosphate (MEP). In Halalkalibacterium halodurans (strain ATCC BAA-125 / DSM 18197 / FERM 7344 / JCM 9153 / C-125) (Bacillus halodurans), this protein is 1-deoxy-D-xylulose 5-phosphate reductoisomerase.